The chain runs to 485 residues: uncharacterized protein (485 aa).

The interval 151–201 (IKAPTNNSQSGDGNGGTNNDNLLGTFDIREKSNGKKGESNGKQGNGQDKKT) is disordered. The span at 155–174 (TNNSQSGDGNGGTNNDNLLG) shows a compositional bias: low complexity. Basic and acidic residues predominate over residues 177–189 (DIREKSNGKKGES).

This sequence belongs to the MG185/MG260 family.

This is an uncharacterized protein from Mycoplasma pneumoniae (strain ATCC 29342 / M129 / Subtype 1) (Mycoplasmoides pneumoniae).